A 553-amino-acid polypeptide reads, in one-letter code: Glutamine--tRNA ligase (553 aa).

The 'HIGH' region signature appears at 34–44 (PEPNGYLHIGH). ATP is bound by residues 35 to 37 (EPN) and 41 to 47 (HIGHAKS). L-glutamine is bound by residues Asp-67 and Tyr-212. ATP-binding positions include Thr-231, 261–262 (RL), and 269–271 (MSK). A 'KMSKS' region motif is present at residues 268–272 (IMSKR).

The protein belongs to the class-I aminoacyl-tRNA synthetase family. As to quaternary structure, monomer.

Its subcellular location is the cytoplasm. The catalysed reaction is tRNA(Gln) + L-glutamine + ATP = L-glutaminyl-tRNA(Gln) + AMP + diphosphate. This chain is Glutamine--tRNA ligase, found in Tolumonas auensis (strain DSM 9187 / NBRC 110442 / TA 4).